We begin with the raw amino-acid sequence, 475 residues long: Aspartyl/glutamyl-tRNA(Asn/Gln) amidotransferase subunit B (475 aa).

This sequence belongs to the GatB/GatE family. GatB subfamily. Heterotrimer of A, B and C subunits.

It catalyses the reaction L-glutamyl-tRNA(Gln) + L-glutamine + ATP + H2O = L-glutaminyl-tRNA(Gln) + L-glutamate + ADP + phosphate + H(+). The catalysed reaction is L-aspartyl-tRNA(Asn) + L-glutamine + ATP + H2O = L-asparaginyl-tRNA(Asn) + L-glutamate + ADP + phosphate + 2 H(+). Allows the formation of correctly charged Asn-tRNA(Asn) or Gln-tRNA(Gln) through the transamidation of misacylated Asp-tRNA(Asn) or Glu-tRNA(Gln) in organisms which lack either or both of asparaginyl-tRNA or glutaminyl-tRNA synthetases. The reaction takes place in the presence of glutamine and ATP through an activated phospho-Asp-tRNA(Asn) or phospho-Glu-tRNA(Gln). This is Aspartyl/glutamyl-tRNA(Asn/Gln) amidotransferase subunit B from Thermodesulfovibrio yellowstonii (strain ATCC 51303 / DSM 11347 / YP87).